The sequence spans 166 residues: NAD(P)H-quinone oxidoreductase subunit I, chloroplastic (166 aa).

4Fe-4S ferredoxin-type domains follow at residues 55–84 (GRIH…VDWK) and 95–124 (LNYS…MTEE). Residues cysteine 64, cysteine 67, cysteine 70, cysteine 74, cysteine 104, cysteine 107, cysteine 110, and cysteine 114 each contribute to the [4Fe-4S] cluster site.

It belongs to the complex I 23 kDa subunit family. NDH is composed of at least 16 different subunits, 5 of which are encoded in the nucleus. [4Fe-4S] cluster is required as a cofactor.

The protein localises to the plastid. It localises to the chloroplast thylakoid membrane. It carries out the reaction a plastoquinone + NADH + (n+1) H(+)(in) = a plastoquinol + NAD(+) + n H(+)(out). The enzyme catalyses a plastoquinone + NADPH + (n+1) H(+)(in) = a plastoquinol + NADP(+) + n H(+)(out). Its function is as follows. NDH shuttles electrons from NAD(P)H:plastoquinone, via FMN and iron-sulfur (Fe-S) centers, to quinones in the photosynthetic chain and possibly in a chloroplast respiratory chain. The immediate electron acceptor for the enzyme in this species is believed to be plastoquinone. Couples the redox reaction to proton translocation, and thus conserves the redox energy in a proton gradient. This Hofmeisteria fasciculata (Helogyne fasciculata) protein is NAD(P)H-quinone oxidoreductase subunit I, chloroplastic.